The following is a 235-amino-acid chain: tRNA1(Val) (adenine(37)-N6)-methyltransferase (235 aa).

It belongs to the methyltransferase superfamily. tRNA (adenine-N(6)-)-methyltransferase family.

It is found in the cytoplasm. It carries out the reaction adenosine(37) in tRNA1(Val) + S-adenosyl-L-methionine = N(6)-methyladenosine(37) in tRNA1(Val) + S-adenosyl-L-homocysteine + H(+). In terms of biological role, specifically methylates the adenine in position 37 of tRNA(1)(Val) (anticodon cmo5UAC). This Glaesserella parasuis serovar 5 (strain SH0165) (Haemophilus parasuis) protein is tRNA1(Val) (adenine(37)-N6)-methyltransferase.